We begin with the raw amino-acid sequence, 96 residues long: uncharacterized protein (96 aa).

Residues 13–35 traverse the membrane as a helical segment; that stretch reads PVVRYVVALLHWLLWRVVVIIAI.

The protein localises to the membrane. This is an uncharacterized protein from Archaeoglobus fulgidus (strain ATCC 49558 / DSM 4304 / JCM 9628 / NBRC 100126 / VC-16).